Here is a 116-residue protein sequence, read N- to C-terminus: MQITVMKGKIHRATVTDADLNYEGSLTVDMDLVDAAGMRVYEKVSVVNINNGARFETYIIEGKRGSGEICLNGAAARLGMKGDKIIVITYAQVEENELPIDYIPKVVHVDENNRKR.

Serine 25 acts as the Schiff-base intermediate with substrate; via pyruvic acid in catalysis. Serine 25 bears the Pyruvic acid (Ser) mark. Threonine 57 is a binding site for substrate. Tyrosine 58 acts as the Proton donor in catalysis. Residue 73-75 (GAA) coordinates substrate.

It belongs to the PanD family. In terms of assembly, heterooctamer of four alpha and four beta subunits. Requires pyruvate as cofactor. Post-translationally, is synthesized initially as an inactive proenzyme, which is activated by self-cleavage at a specific serine bond to produce a beta-subunit with a hydroxyl group at its C-terminus and an alpha-subunit with a pyruvoyl group at its N-terminus.

The protein localises to the cytoplasm. The catalysed reaction is L-aspartate + H(+) = beta-alanine + CO2. It participates in cofactor biosynthesis; (R)-pantothenate biosynthesis; beta-alanine from L-aspartate: step 1/1. Catalyzes the pyruvoyl-dependent decarboxylation of aspartate to produce beta-alanine. This Leptospira borgpetersenii serovar Hardjo-bovis (strain JB197) protein is Aspartate 1-decarboxylase.